We begin with the raw amino-acid sequence, 581 residues long: MSLPMNSLYSLTWGDYGTSLVSAIQLLRCHGDLVDCTLAAGGRSFPAHKIVLCAASPFLLDLLKNTPCKHPVVMLAGVNANDLEALLEFVYRGEVSVDHAQLPSLLQAAQCLNIQGLAPQTVTKDDYTTHSIQLQHMIPQHHDQDQLIATIATAPQQTVHAQVVEDIHHQGQILQATTQTNAAGQQQTIVTTDAAKHDQAVIQAFLPARKRKPRVKKMSPTAPKISKVEGMDTIMGTPTSSHGSGSVQQVLGENGAEGQLLSSTPIIKSEGQKVETIVTMDPNNMIPVTSANAATGEITPAQGATGSSGGNTSGVLSTPKAKRAKHPPGTEKPRSRSQSEQPATCPICYAVIRQSRNLRRHLELRHFAKPGVKKEKKTTSGKKSSSGSSGSGSGALSSSGSVPQVQTVQSLHTLQGVQVKKDPDAQQQQQQQQQQQQQQQQAMTVSGATGGQVQQQVQQVQQQVQQQQQQQQQQQQQLQHHQIIDSSGNITTATTSAQAAAAAQQQAAGQQQQLVAQSDGSESGAPLSIAQVQTLQGHQIIGNLNQVNMTDFQQQQPQQQQQQQQQQQQQQQQQQQTQQTL.

In terms of domain architecture, BTB spans 34–99 (VDCTLAAGGR…VYRGEVSVDH (66 aa)). Positions 201–397 (VIQAFLPARK…SSGSGSGALS (197 aa)) are interaction with E(bx). Position 237 is a phosphothreonine (T237). Disordered stretches follow at residues 298-343 (ITPA…EQPA) and 364-404 (LRHF…SVPQ). The segment at 343-366 (ATCPICYAVIRQSRNLRRHLELRH) adopts a C2H2-type; degenerate zinc-finger fold. Residues 381–401 (GKKSSSGSSGSGSGALSSSGS) are compositionally biased toward low complexity.

In terms of assembly, interacts with Bin1, lolal, corto, ttk and ph-p. Interacts with FACT subunits Ssrp and dre4/SPT16. Interacts with E(bx). Upon ecdysone stimulation, interacts with Nup98. The N-terminus is blocked. In terms of tissue distribution, expressed in the central nervous system throughout development.

Its subcellular location is the nucleus. The protein localises to the chromosome. Its function is as follows. Transcriptional activator that functions by regulating chromatin structure. Overcomes the repressive effects of chromatin by promoting the open chromatin conformation in promoter gene regions, thereby allowing access to other transcription factors. Binds to DNA Polycomb response elements (PREs) at the bithorax complex and to the proximal region of the engrailed promoter, and positively regulates transcription of many genes including homeotic ones. Involved in zygotic genome activation (ZGA), a critical event in early embryonic development during which the developmental control passes from maternally provided mRNAs to the expression of the zygotic genome after fertilization. Binds to the DNA sequence (GA)n, with optimal binding to the pentamer 5'-GAGAG-3'. Binds DNA as an oligomer. May also act as a transcriptional repressor, maintaining the repressed state of genes including lolal, and down-regulating its own transcription. Required for dosage compensation in males and may be involved in oogenesis. Also has a role in nuclear division. In Drosophila melanogaster (Fruit fly), this protein is Transcription activator GAGA (Trl).